The sequence spans 334 residues: Kihadalactone A synthase LFS (334 aa).

The 106-residue stretch at 181–286 folds into the Fe2OG dioxygenase domain; sequence KTASYSNMFH…RYSTGLFLCP (106 aa). Fe cation is bound by residues histidine 208, aspartate 210, and histidine 269. Residue arginine 277 coordinates 2-oxoglutarate.

This sequence belongs to the iron/ascorbate-dependent oxidoreductase family. Fe(2+) serves as cofactor. As to expression, expressed in maturing fruits and in juice vesicles.

It catalyses the reaction (1R,2R,3S,8R,10R,11R,15S,16S)-3-(acetyloxy)-15-(1-hydroxy-4-oxobutan-2-yl)-2,7,7,11,16-pentamethyl-5-oxo-6-oxatetracyclo[9.7.0.0(2,8).0(12,16)]octadec-12-en-10-yl acetate + 2-oxoglutarate + O2 = kihadalactone A + succinate + CO2 + 2 H2O. Its pathway is secondary metabolite biosynthesis; terpenoid biosynthesis. Functionally, 2-oxoglutarate-Fe(II) type oxidoreductase involved in the biosynthesis of limonoids triterpene natural products such as limonin, a compound with insecticidal activity responsible for the bitter taste in citrus. Catalyzes the formation of kihadalactone A. The chain is Kihadalactone A synthase LFS from Citrus sinensis (Sweet orange).